Here is a 43-residue protein sequence, read N- to C-terminus: Protein PsbN 2 (43 aa).

The chain crosses the membrane as a helical span at residues 4–24; it reads ATILGISIAAALVGITVLALY.

The protein belongs to the PsbN family.

The protein resides in the cellular thylakoid membrane. In terms of biological role, may play a role in photosystem I and II biogenesis. This chain is Protein PsbN 2, found in Microcystis aeruginosa (strain NIES-843 / IAM M-2473).